The primary structure comprises 275 residues: 5'-nucleotidase SurE (275 aa).

The a divalent metal cation site is built by D12, D13, S44, and N102.

The protein belongs to the SurE nucleotidase family. A divalent metal cation serves as cofactor.

It localises to the cytoplasm. It catalyses the reaction a ribonucleoside 5'-phosphate + H2O = a ribonucleoside + phosphate. In terms of biological role, nucleotidase that shows phosphatase activity on nucleoside 5'-monophosphates. The protein is 5'-nucleotidase SurE of Synechococcus sp. (strain RCC307).